A 179-amino-acid chain; its full sequence is Coatomer subunit zeta-2 (179 aa).

It belongs to the adaptor complexes small subunit family. As to quaternary structure, oligomeric complex that consists of at least the alpha, beta, beta', gamma, delta, epsilon and zeta subunits.

The protein localises to the cytoplasm. It localises to the golgi apparatus membrane. It is found in the cytoplasmic vesicle. The protein resides in the COPI-coated vesicle membrane. Functionally, the coatomer is a cytosolic protein complex that binds to dilysine motifs and reversibly associates with Golgi non-clathrin-coated vesicles, which further mediate biosynthetic protein transport from the ER, via the Golgi up to the trans Golgi network. Coatomer complex is required for budding from Golgi membranes, and is essential for the retrograde Golgi-to-ER transport of dilysine-tagged proteins. The zeta subunit may be involved in regulating the coat assembly and, hence, the rate of biosynthetic protein transport due to its association-dissociation properties with the coatomer complex. This chain is Coatomer subunit zeta-2, found in Arabidopsis thaliana (Mouse-ear cress).